The chain runs to 117 residues: Large ribosomal subunit protein bL19 (117 aa).

This sequence belongs to the bacterial ribosomal protein bL19 family.

This protein is located at the 30S-50S ribosomal subunit interface and may play a role in the structure and function of the aminoacyl-tRNA binding site. The sequence is that of Large ribosomal subunit protein bL19 from Cutibacterium acnes (strain DSM 16379 / KPA171202) (Propionibacterium acnes).